Consider the following 89-residue polypeptide: Small ribosomal subunit protein uS15 (89 aa).

It belongs to the universal ribosomal protein uS15 family. Part of the 30S ribosomal subunit. Forms a bridge to the 50S subunit in the 70S ribosome, contacting the 23S rRNA.

Functionally, one of the primary rRNA binding proteins, it binds directly to 16S rRNA where it helps nucleate assembly of the platform of the 30S subunit by binding and bridging several RNA helices of the 16S rRNA. Forms an intersubunit bridge (bridge B4) with the 23S rRNA of the 50S subunit in the ribosome. This is Small ribosomal subunit protein uS15 from Sulfurovum sp. (strain NBC37-1).